Consider the following 530-residue polypeptide: T-box transcription factor TBX21 (530 aa).

The interval 1 to 55 is disordered; that stretch reads MGIVEPGCGDMLTGTEPMPSDEGRGPGADQQHRFFYPEPGAQDPTDRRAGSSLGT. Ser-52 is modified (phosphoserine). At Thr-55 the chain carries Phosphothreonine. Phosphotyrosine is present on residues Tyr-76 and Tyr-117. The segment at residues 140–325 is a DNA-binding region (T-box); that stretch reads LSNHLLWSKF…NNPFAKGFRE (186 aa). Phosphotyrosine; by ABL1 is present on Tyr-219. Residue Ser-224 is modified to Phosphoserine. Tyr-265 carries the post-translational modification Phosphotyrosine; by ABL1. Thr-302 is subject to Phosphothreonine. Position 304 is a phosphotyrosine; by ABL1 (Tyr-304). Lys-313 participates in a covalent cross-link: Glycyl lysine isopeptide (Lys-Gly) (interchain with G-Cter in ubiquitin). The interval 444–530 is disordered; that stretch reads AGWFRPMRTL…EGQFYNYFPN (87 aa). The segment covering 462-482 has biased composition (polar residues); the sequence is SEEQGSSPSLWPEVTSLQPEP. A compositionally biased stretch (low complexity) spans 498–515; that stretch reads SPYPSSGDSSSPAGAPSP. Residue Ser-508 is modified to Phosphoserine. A Phosphotyrosine; by ITK modification is found at Tyr-525.

Interacts with RUNX1 and RUNX3. Interacts with ITK. The phosphorylated form (at Tyr-525) interacts with GATA3. Interacts with ABL1. Interacts with RELA. The phosphorylated form (at Thr-302) interacts with NFATC2. Interacts with KDM6B. Interacts with SMARCA4 in a KDM6B-dependent manner. Interacts with CCTN1 and CDK9. Interacts with USP10. In terms of processing, phosphorylations at Ser-52, Tyr-76, Ser-224 and Ser-508 are regulated by mTORC1. Phosphorylation at Tyr-525 is essential for its interaction GATA3. Phosphorylation at Tyr-219, Tyr-265 and Tyr-304 enhances its transcriptional activator activity. Phosphorylation at Thr-302 is required for its interaction with NFATC2. Ubiquitinated at Lys-313, leading to its degradation by the proteasome. Ubiquitination is essential for controlling protein stability, binding to the T-box-binding element of the IFN-gamma promoter, and for interaction with NFATC2 through induction of phosphorylation at Thr-302. Deubiquitinated by USP10 leading to its stabilization. T-cell specific. Expressed in regulatory T (TReg) cells.

It is found in the nucleus. Its function is as follows. Lineage-defining transcription factor which initiates Th1 lineage development from naive Th precursor cells both by activating Th1 genetic programs and by repressing the opposing Th2 and Th17 genetic programs. Activates transcription of a set of genes important for Th1 cell function, including those encoding IFN-gamma and the chemokine receptor CXCR3. Activates IFNG and CXCR3 genes in part by recruiting chromatin remodeling complexes including KDM6B, a SMARCA4-containing SWI/SNF-complex, and an H3K4me2-methyltransferase complex to their promoters and all of these complexes serve to establish a more permissive chromatin state conducive with transcriptional activation. Can activate Th1 genes also via recruitment of Mediator complex and P-TEFb (composed of CDK9 and CCNT1/cyclin-T1) in the form of the super elongation complex (SEC) to super-enhancers and associated genes in activated Th1 cells. Inhibits the Th17 cell lineage commitment by blocking RUNX1-mediated transactivation of Th17 cell-specific transcriptinal regulator RORC. Inhibits the Th2 cell lineage commitment by suppressing the production of Th2 cytokines, such as IL-4, IL-5, and IL- 13, via repression of transcriptional regulators GATA3 and NFATC2. Protects Th1 cells from amplifying aberrant type-I IFN response in an IFN-gamma abundant microenvironment by acting as a repressor of type-I IFN transcription factors and type-I IFN- stimulated genes. Acts as a regulator of antiviral B-cell responses; controls chronic viral infection by promoting the antiviral antibody IgG2a isotype switching and via regulation of a broad antiviral gene expression program. The protein is T-box transcription factor TBX21 (Tbx21) of Mus musculus (Mouse).